The chain runs to 424 residues: Dual-specificity RNA methyltransferase RlmN (424 aa).

Glu-132 acts as the Proton acceptor in catalysis. Positions Gly-138–Leu-388 constitute a Radical SAM core domain. A disulfide bridge links Cys-145 with Cys-391. The [4Fe-4S] cluster site is built by Cys-152, Cys-156, and Cys-159. Residues Gly-217–Glu-218, Ser-249, Ser-271–His-273, and Asn-348 each bind S-adenosyl-L-methionine. Cys-391 functions as the S-methylcysteine intermediate in the catalytic mechanism.

The protein belongs to the radical SAM superfamily. RlmN family. It depends on [4Fe-4S] cluster as a cofactor.

The protein resides in the cytoplasm. It catalyses the reaction adenosine(2503) in 23S rRNA + 2 reduced [2Fe-2S]-[ferredoxin] + 2 S-adenosyl-L-methionine = 2-methyladenosine(2503) in 23S rRNA + 5'-deoxyadenosine + L-methionine + 2 oxidized [2Fe-2S]-[ferredoxin] + S-adenosyl-L-homocysteine. It carries out the reaction adenosine(37) in tRNA + 2 reduced [2Fe-2S]-[ferredoxin] + 2 S-adenosyl-L-methionine = 2-methyladenosine(37) in tRNA + 5'-deoxyadenosine + L-methionine + 2 oxidized [2Fe-2S]-[ferredoxin] + S-adenosyl-L-homocysteine. Specifically methylates position 2 of adenine 2503 in 23S rRNA and position 2 of adenine 37 in tRNAs. m2A2503 modification seems to play a crucial role in the proofreading step occurring at the peptidyl transferase center and thus would serve to optimize ribosomal fidelity. The sequence is that of Dual-specificity RNA methyltransferase RlmN from Methylobacterium radiotolerans (strain ATCC 27329 / DSM 1819 / JCM 2831 / NBRC 15690 / NCIMB 10815 / 0-1).